A 495-amino-acid chain; its full sequence is Aspartyl/glutamyl-tRNA(Asn/Gln) amidotransferase subunit B (495 aa).

The protein belongs to the GatB/GatE family. GatB subfamily. As to quaternary structure, heterotrimer of A, B and C subunits.

The catalysed reaction is L-glutamyl-tRNA(Gln) + L-glutamine + ATP + H2O = L-glutaminyl-tRNA(Gln) + L-glutamate + ADP + phosphate + H(+). It carries out the reaction L-aspartyl-tRNA(Asn) + L-glutamine + ATP + H2O = L-asparaginyl-tRNA(Asn) + L-glutamate + ADP + phosphate + 2 H(+). Allows the formation of correctly charged Asn-tRNA(Asn) or Gln-tRNA(Gln) through the transamidation of misacylated Asp-tRNA(Asn) or Glu-tRNA(Gln) in organisms which lack either or both of asparaginyl-tRNA or glutaminyl-tRNA synthetases. The reaction takes place in the presence of glutamine and ATP through an activated phospho-Asp-tRNA(Asn) or phospho-Glu-tRNA(Gln). The sequence is that of Aspartyl/glutamyl-tRNA(Asn/Gln) amidotransferase subunit B from Rippkaea orientalis (strain PCC 8801 / RF-1) (Cyanothece sp. (strain PCC 8801)).